Consider the following 56-residue polypeptide: Small ribosomal subunit protein uS14 (56 aa).

Residues cysteine 21, cysteine 24, cysteine 39, and cysteine 42 each contribute to the Zn(2+) site.

Belongs to the universal ribosomal protein uS14 family. In terms of assembly, component of the small ribosomal subunit. Mature ribosomes consist of a small (40S) and a large (60S) subunit. The 40S subunit contains about 32 different proteins and 1 molecule of RNA (18S). The 60S subunit contains 45 different proteins and 3 molecules of RNA (25S, 5.8S and 5S). Zn(2+) serves as cofactor.

It localises to the cytoplasm. Its function is as follows. Component of the ribosome, a large ribonucleoprotein complex responsible for the synthesis of proteins in the cell. The small ribosomal subunit (SSU) binds messenger RNAs (mRNAs) and translates the encoded message by selecting cognate aminoacyl-transfer RNA (tRNA) molecules. The large subunit (LSU) contains the ribosomal catalytic site termed the peptidyl transferase center (PTC), which catalyzes the formation of peptide bonds, thereby polymerizing the amino acids delivered by tRNAs into a polypeptide chain. The nascent polypeptides leave the ribosome through a tunnel in the LSU and interact with protein factors that function in enzymatic processing, targeting, and the membrane insertion of nascent chains at the exit of the ribosomal tunnel. The polypeptide is Small ribosomal subunit protein uS14 (Candida albicans (strain SC5314 / ATCC MYA-2876) (Yeast)).